Reading from the N-terminus, the 495-residue chain is Membrane-bound lytic murein transglycosylase F (495 aa).

Residues 1–30 (MSRIRHHRFIQSCLVISTLLITLTGCQVES) form the signal peptide. The non-LT domain stretch occupies residues 31–270 (EPKTKLEQIR…LLEEKYFGHV (240 aa)). The LT domain stretch occupies residues 272–495 (SFDYVDTRAF…SVSQAIETKK (224 aa)). Glu-315 is a catalytic residue.

It in the N-terminal section; belongs to the bacterial solute-binding protein 3 family. This sequence in the C-terminal section; belongs to the transglycosylase Slt family.

The protein localises to the cell outer membrane. It carries out the reaction Exolytic cleavage of the (1-&gt;4)-beta-glycosidic linkage between N-acetylmuramic acid (MurNAc) and N-acetylglucosamine (GlcNAc) residues in peptidoglycan, from either the reducing or the non-reducing ends of the peptidoglycan chains, with concomitant formation of a 1,6-anhydrobond in the MurNAc residue.. In terms of biological role, murein-degrading enzyme that degrades murein glycan strands and insoluble, high-molecular weight murein sacculi, with the concomitant formation of a 1,6-anhydromuramoyl product. Lytic transglycosylases (LTs) play an integral role in the metabolism of the peptidoglycan (PG) sacculus. Their lytic action creates space within the PG sacculus to allow for its expansion as well as for the insertion of various structures such as secretion systems and flagella. The polypeptide is Membrane-bound lytic murein transglycosylase F (Aliivibrio fischeri (strain ATCC 700601 / ES114) (Vibrio fischeri)).